Here is a 701-residue protein sequence, read N- to C-terminus: Polyribonucleotide nucleotidyltransferase (701 aa).

Mg(2+) is bound by residues Asp485 and Asp491. In terms of domain architecture, KH spans 552–611 (PRIIKIRINPEKIRDVIGKGGAVIRALTEETGTTIDITDDGTVMIACVNAEGGELAKKRI). The S1 motif domain maps to 621–689 (GRVYDGTVLK…DKGRLRLSMK (69 aa)).

It belongs to the polyribonucleotide nucleotidyltransferase family. Mg(2+) serves as cofactor.

It localises to the cytoplasm. The enzyme catalyses RNA(n+1) + phosphate = RNA(n) + a ribonucleoside 5'-diphosphate. In terms of biological role, involved in mRNA degradation. Catalyzes the phosphorolysis of single-stranded polyribonucleotides processively in the 3'- to 5'-direction. This Nitrosospira multiformis (strain ATCC 25196 / NCIMB 11849 / C 71) protein is Polyribonucleotide nucleotidyltransferase.